We begin with the raw amino-acid sequence, 214 residues long: Pyridoxine/pyridoxamine 5'-phosphate oxidase (214 aa).

Substrate contacts are provided by residues 9–12 and K67; that span reads RKNY. Residues 62–67, 77–78, K84, and Q106 each bind FMN; these read RMVLLK and YT. Y124, R128, and S132 together coordinate substrate. FMN is bound by residues 141-142 and W186; that span reads QS. 192-194 lines the substrate pocket; sequence RLH. R196 is an FMN binding site.

It belongs to the pyridoxamine 5'-phosphate oxidase family. In terms of assembly, homodimer. The cofactor is FMN.

The enzyme catalyses pyridoxamine 5'-phosphate + O2 + H2O = pyridoxal 5'-phosphate + H2O2 + NH4(+). It carries out the reaction pyridoxine 5'-phosphate + O2 = pyridoxal 5'-phosphate + H2O2. It functions in the pathway cofactor metabolism; pyridoxal 5'-phosphate salvage; pyridoxal 5'-phosphate from pyridoxamine 5'-phosphate: step 1/1. The protein operates within cofactor metabolism; pyridoxal 5'-phosphate salvage; pyridoxal 5'-phosphate from pyridoxine 5'-phosphate: step 1/1. Catalyzes the oxidation of either pyridoxine 5'-phosphate (PNP) or pyridoxamine 5'-phosphate (PMP) into pyridoxal 5'-phosphate (PLP). The protein is Pyridoxine/pyridoxamine 5'-phosphate oxidase of Gloeothece citriformis (strain PCC 7424) (Cyanothece sp. (strain PCC 7424)).